Consider the following 422-residue polypeptide: MAM and fibronectin type III domain-containing protein 1 (422 aa).

Residues 1–75 form the MAM domain; it reads KFYYHMYGAT…VSLMEGICAG (75 aa). 3 Fibronectin type-III domains span residues 2–74, 196–286, and 291–386; these read FYYH…GICA, PGWN…QART, and PSRA…YIVT.

In terms of tissue distribution, component of the acid-insoluble and acid-soluble organic matrix of the aragonitic skeleton (at protein level).

Its subcellular location is the secreted. This Acropora millepora (Staghorn coral) protein is MAM and fibronectin type III domain-containing protein 1.